A 371-amino-acid polypeptide reads, in one-letter code: DNA replication and repair protein RecF (371 aa).

30-37 (GQNGSGKT) is an ATP binding site.

The protein belongs to the RecF family.

The protein localises to the cytoplasm. Functionally, the RecF protein is involved in DNA metabolism; it is required for DNA replication and normal SOS inducibility. RecF binds preferentially to single-stranded, linear DNA. It also seems to bind ATP. The chain is DNA replication and repair protein RecF from Chlorobium phaeovibrioides (strain DSM 265 / 1930) (Prosthecochloris vibrioformis (strain DSM 265)).